We begin with the raw amino-acid sequence, 510 residues long: Propionyl-CoA carboxylase beta chain (510 aa).

The region spanning 1 to 257 (MKDILEQLED…NNREKPPVRP (257 aa)) is the CoA carboxyltransferase N-terminal domain. Positions 1–504 (MKDILEQLED…NKSVQMPWKK (504 aa)) are carboxyltransferase. A CoA carboxyltransferase C-terminal domain is found at 261–504 (DPDRIEPSLD…NKSVQMPWKK (244 aa)). The acyl-CoA binding stretch occupies residues 292 to 325 (DEGDFYEIQEEFAKNIITGFIRLEGRTVGVVANQ).

It belongs to the AccD/PCCB family. In terms of assembly, the holoenzyme is a dodecamer composed of 6 PccA/alpha subunits and 6 PccB/beta subunits.

It catalyses the reaction propanoyl-CoA + hydrogencarbonate + ATP = (S)-methylmalonyl-CoA + ADP + phosphate + H(+). It functions in the pathway metabolic intermediate metabolism; propanoyl-CoA degradation; succinyl-CoA from propanoyl-CoA: step 1/3. Its function is as follows. This is one of the 2 subunits of the biotin-dependent propionyl-CoA carboxylase (PCC), the enzyme catalyzing the carboxylation of propionyl-CoA/propanoyl-CoA to D-methylmalonyl-CoA/(S)-methylmalonyl-CoA. Within the holoenzyme, the alpha subunit catalyzes the ATP-dependent carboxylation of the biotin carried by the biotin carboxyl carrier (BCC) domain, while the beta subunit then tranfers the carboxyl group from carboxylated biotin to propionyl-CoA. This is Propionyl-CoA carboxylase beta chain from Roseobacter denitrificans (strain ATCC 33942 / OCh 114) (Erythrobacter sp. (strain OCh 114)).